Reading from the N-terminus, the 252-residue chain is Chitooligosaccharide deacetylase (252 aa).

Mg(2+) is bound by residues His-61 and His-125.

The protein belongs to the YdjC deacetylase family. ChbG subfamily. As to quaternary structure, homodimer. Mg(2+) serves as cofactor.

The protein resides in the cytoplasm. The enzyme catalyses N,N'-diacetylchitobiose + H2O = N-acetyl-beta-D-glucosaminyl-(1-&gt;4)-D-glucosamine + acetate. It carries out the reaction diacetylchitobiose-6'-phosphate + H2O = N'-monoacetylchitobiose-6'-phosphate + acetate. Its pathway is glycan degradation; chitin degradation. Its function is as follows. Involved in the degradation of chitin. ChbG is essential for growth on the acetylated chitooligosaccharides chitobiose and chitotriose but is dispensable for growth on cellobiose and chitosan dimer, the deacetylated form of chitobiose. Deacetylation of chitobiose-6-P and chitotriose-6-P is necessary for both the activation of the chb promoter by the regulatory protein ChbR and the hydrolysis of phosphorylated beta-glucosides by the phospho-beta-glucosidase ChbF. Catalyzes the removal of only one acetyl group from chitobiose-6-P to yield monoacetylchitobiose-6-P, the inducer of ChbR and the substrate of ChbF. This is Chitooligosaccharide deacetylase from Escherichia coli O127:H6 (strain E2348/69 / EPEC).